The chain runs to 196 residues: ATP-dependent Clp protease proteolytic subunit (196 aa).

Ser-96 acts as the Nucleophile in catalysis. Residue His-121 is part of the active site.

This sequence belongs to the peptidase S14 family. As to quaternary structure, fourteen ClpP subunits assemble into 2 heptameric rings which stack back to back to give a disk-like structure with a central cavity, resembling the structure of eukaryotic proteasomes.

The protein resides in the cytoplasm. The catalysed reaction is Hydrolysis of proteins to small peptides in the presence of ATP and magnesium. alpha-casein is the usual test substrate. In the absence of ATP, only oligopeptides shorter than five residues are hydrolyzed (such as succinyl-Leu-Tyr-|-NHMec, and Leu-Tyr-Leu-|-Tyr-Trp, in which cleavage of the -Tyr-|-Leu- and -Tyr-|-Trp bonds also occurs).. Functionally, cleaves peptides in various proteins in a process that requires ATP hydrolysis. Has a chymotrypsin-like activity. Plays a major role in the degradation of misfolded proteins. The chain is ATP-dependent Clp protease proteolytic subunit from Streptococcus sanguinis (strain SK36).